The sequence spans 986 residues: Ephrin type-A receptor 4 (986 aa).

The first 19 residues, 1-19, serve as a signal peptide directing secretion; that stretch reads MAGVPVGALLPLLVGVCGA. The Extracellular portion of the chain corresponds to 20-547; it reads VTGSRVYPAN…PIIGDGTNPT (528 aa). The Eph LBD domain occupies 30–209; it reads EVTLLDSRSV…FYKKCPLTVR (180 aa). 3 N-linked (GlcNAc...) asparagine glycosylation sites follow: Asn235, Asn340, and Asn408. Fibronectin type-III domains follow at residues 328 to 439 and 440 to 537; these read PPSA…TNQA and APSP…TVPS. Residues 548 to 569 traverse the membrane as a helical segment; sequence VLLVSVAGSVVLVVILIAAFVI. Over 570–986 the chain is Cytoplasmic; it reads SRRRSKYSKA…QQMHGRMVPV (417 aa). A phosphotyrosine; by autocatalysis mark is found at Tyr596 and Tyr602. A Protein kinase domain is found at 621–882; it reads IKIEKVIGVG…QIVNMLDKLI (262 aa). ATP is bound by residues 627–635 and Lys653; that span reads IGVGEFGEV. Asp746 (proton acceptor) is an active-site residue. Phosphotyrosine; by autocatalysis is present on residues Tyr779 and Tyr928. One can recognise an SAM domain in the interval 911–975; the sequence is SAVVSVSDWL…LSSVQAMRSQ (65 aa). Positions 984 to 986 match the PDZ-binding motif; that stretch reads VPV.

This sequence belongs to the protein kinase superfamily. Tyr protein kinase family. Ephrin receptor subfamily. Interacts with the src family kinase, p59-Fyn, through the major phosphorylation site at position Tyr-602. Interacts (via PDZ motif) with SIPA1L1 (via PDZ domain); controls neuronal morphology through regulation of the RAP1 (RAP1A or RAP1B) and RAP2 (RAP2A, RAP2B or RAP2C) GTPases. As to expression, expressed at high levels in brain, with expression also detected in the kidney, lung, muscle and thymus.

It is found in the cell membrane. It localises to the early endosome. The catalysed reaction is L-tyrosyl-[protein] + ATP = O-phospho-L-tyrosyl-[protein] + ADP + H(+). Receptor tyrosine kinase which binds membrane-bound ephrin family ligands residing on adjacent cells, leading to contact-dependent bidirectional signaling into neighboring cells. The signaling pathway downstream of the receptor is referred to as forward signaling while the signaling pathway downstream of the ephrin ligand is referred to as reverse signaling. Highly promiscuous, it has the unique property among Eph receptors to bind and to be physiologically activated by both GPI-anchored ephrin-A and transmembrane ephrin-B ligands including EFNA1 and EFNB3. Upon activation by ephrin ligands, modulates cell morphology and integrin-dependent cell adhesion through regulation of the Rac, Rap and Rho GTPases activity. Plays an important role in the development of the nervous system controlling different steps of axonal guidance including the establishment of the corticospinal projections. This is Ephrin type-A receptor 4 (EPHA4) from Gallus gallus (Chicken).